The sequence spans 321 residues: Outer envelope protein 36, chloroplastic (321 aa).

It belongs to the OEP80 (TC 1.B.33.2) family. Expressed in germinating seeds.

It localises to the plastid. The protein localises to the chloroplast outer membrane. Its function is as follows. May play a role during plastid development. In Arabidopsis thaliana (Mouse-ear cress), this protein is Outer envelope protein 36, chloroplastic.